A 295-amino-acid polypeptide reads, in one-letter code: Nitrogenase iron protein (295 aa).

ATP is bound at residue 10-17; that stretch reads GKGGIGKS. C98 lines the [4Fe-4S] cluster pocket. R101 is modified (ADP-ribosylarginine; by dinitrogenase reductase ADP-ribosyltransferase). C133 serves as a coordination point for [4Fe-4S] cluster.

It belongs to the NifH/BchL/ChlL family. Homodimer. It depends on [4Fe-4S] cluster as a cofactor. Post-translationally, the reversible ADP-ribosylation of Arg-101 inactivates the nitrogenase reductase and regulates nitrogenase activity.

The catalysed reaction is N2 + 8 reduced [2Fe-2S]-[ferredoxin] + 16 ATP + 16 H2O = H2 + 8 oxidized [2Fe-2S]-[ferredoxin] + 2 NH4(+) + 16 ADP + 16 phosphate + 6 H(+). Functionally, the key enzymatic reactions in nitrogen fixation are catalyzed by the nitrogenase complex, which has 2 components: the iron protein and the molybdenum-iron protein. This Tolumonas auensis (strain DSM 9187 / NBRC 110442 / TA 4) protein is Nitrogenase iron protein.